Here is a 76-residue protein sequence, read N- to C-terminus: Demidefensin-3 (76 aa).

Positions 1-22 are cleaved as a signal peptide; sequence MRTLALHTAMLLLVALHAQAEA. The propeptide occupies 23–64; it reads RQARADEAAAQQQPGADDQGMAHSFTWPENAALPLSESERGL. Residues 25–45 form a disordered region; sequence ARADEAAAQQQPGADDQGMAH. The span at 30 to 44 shows a compositional bias: low complexity; sequence AAAQQQPGADDQGMA. A disulfide bridge links cysteine 68 with cysteine 73. The propeptide occupies 74–76; the sequence is RLL.

Belongs to the alpha-defensin family. Theta subfamily. As to quaternary structure, forms a cyclic homodimer; disulfide-linked. This is a cyclic peptide.

Its function is as follows. Has antimicrobial activities against bacteria and fungi. This Macaca mulatta (Rhesus macaque) protein is Demidefensin-3.